The following is a 396-amino-acid chain: Acetate kinase (396 aa).

Position 8 (Asn8) interacts with Mg(2+). Lys15 provides a ligand contact to ATP. Arg89 lines the substrate pocket. Catalysis depends on Asp146, which acts as the Proton donor/acceptor. ATP-binding positions include 206–210 (HIGNG), 283–285 (DMR), and 331–335 (GVGEN). Position 383 (Glu383) interacts with Mg(2+).

It belongs to the acetokinase family. In terms of assembly, homodimer. It depends on Mg(2+) as a cofactor. Mn(2+) is required as a cofactor.

It localises to the cytoplasm. The catalysed reaction is acetate + ATP = acetyl phosphate + ADP. It participates in metabolic intermediate biosynthesis; acetyl-CoA biosynthesis; acetyl-CoA from acetate: step 1/2. Catalyzes the formation of acetyl phosphate from acetate and ATP. Can also catalyze the reverse reaction. This chain is Acetate kinase, found in Streptococcus pneumoniae (strain 70585).